The sequence spans 148 residues: UPF0756 membrane protein YeaL (148 aa).

The next 4 membrane-spanning stretches (helical) occupy residues 14–34, 51–71, 86–106, and 121–141; these read ALGF…LIIV, LSIG…SGTL, LVAI…VTLM, and VLGV…AGLV.

It belongs to the UPF0756 family.

Its subcellular location is the cell membrane. The sequence is that of UPF0756 membrane protein YeaL from Escherichia coli (strain B / REL606).